A 182-amino-acid chain; its full sequence is Plasmolipin (182 aa).

A disordered region spans residues 1–20 (MAEFPSKVNTRTSSPAQGGG). The Cytoplasmic portion of the chain corresponds to 1 to 35 (MAEFPSKVNTRTSSPAQGGGAVVSTLSPDLGFVRS). A compositionally biased stretch (polar residues) spans 7–16 (KVNTRTSSPA). Residues 32–166 (FVRSSLGALM…SAFLSFQAWR (135 aa)) form the MARVEL domain. A helical membrane pass occupies residues 36-56 (SLGALMLLQLVLGLLVWALIA). The Extracellular segment spans residues 57 to 68 (DTPYHLYPSYGW). The helical transmembrane segment at 69–89 (VMFVAVFLWLVTIIFFVLYLF) threads the bilayer. Residues 90–99 (QLHMKLYMVP) are Cytoplasmic-facing. The chain crosses the membrane as a helical span at residues 100-120 (WPLVLMVFNVGATVLYITAFI). Residues 121-141 (TCSASVELTSLKGSQPYNQRA) are Extracellular-facing. A helical membrane pass occupies residues 142–162 (AASFFSCLVMIAYGVSAFLSF). Residues 163–182 (QAWRGVGSNAATSQMAGGYA) lie on the Cytoplasmic side of the membrane.

The protein belongs to the MAL family. Forms oligomers. Phosphorylated.

Its subcellular location is the cell membrane. It localises to the myelin membrane. It is found in the apical cell membrane. Functionally, main component of the myelin sheath that plays an important role in myelin membrane biogenesis and myelination. Plays an essential function in apical endocytosis. Regulates epithelial development through the regulation of apical endocytosis. Part of the intracellular machinery that mediates basolateral-to-apical transport of ICAM-1, an essential adhesion receptor in epithelial cells, from the subapical compartment in hepatic epithelial cells. This is Plasmolipin (PLLP) from Bos taurus (Bovine).